Consider the following 148-residue polypeptide: UPF0178 protein lpl0088 (148 aa).

Belongs to the UPF0178 family.

This Legionella pneumophila (strain Lens) protein is UPF0178 protein lpl0088.